Here is a 249-residue protein sequence, read N- to C-terminus: MSGHSKWNNIQHRKGAQDKKRAKLFTKFGRELTIAAKEGGGDPNFNPRLRLAIEKAKAGNMPKDILERAIKKGSGELEGVDFTEMRYEGYGPAGTAFIVEAVTDNKNRTASEMRMTFTRKDGNLGADGAVSWMFKKKGVITVKAEGIDADEFMMAALEAGAEDVTEDDGYFEVTTEYTEFQTVLENLKNAGYQYEEAEISMIPENTVEITDLETAKKVMALYDALEDLDDSQNVYSNFDIPDEILEQLD.

The segment covering 1–10 has biased composition (polar residues); it reads MSGHSKWNNI. The interval 1–20 is disordered; the sequence is MSGHSKWNNIQHRKGAQDKK.

Belongs to the TACO1 family.

The protein resides in the cytoplasm. The chain is Probable transcriptional regulatory protein FN1661 from Fusobacterium nucleatum subsp. nucleatum (strain ATCC 25586 / DSM 15643 / BCRC 10681 / CIP 101130 / JCM 8532 / KCTC 2640 / LMG 13131 / VPI 4355).